We begin with the raw amino-acid sequence, 384 residues long: S-adenosylmethionine synthase (384 aa).

Histidine 15 provides a ligand contact to ATP. Aspartate 17 provides a ligand contact to Mg(2+). Glutamate 43 contacts K(+). 2 residues coordinate L-methionine: glutamate 56 and glutamine 99. Residues 99–109 (QSPDINQGVDK) form a flexible loop region. ATP contacts are provided by residues 164 to 166 (DAK), 230 to 231 (RF), aspartate 239, 245 to 246 (RK), alanine 262, and lysine 266. Aspartate 239 contributes to the L-methionine binding site. Residue lysine 270 participates in L-methionine binding.

It belongs to the AdoMet synthase family. Homotetramer; dimer of dimers. Requires Mg(2+) as cofactor. The cofactor is K(+).

The protein localises to the cytoplasm. It carries out the reaction L-methionine + ATP + H2O = S-adenosyl-L-methionine + phosphate + diphosphate. Its pathway is amino-acid biosynthesis; S-adenosyl-L-methionine biosynthesis; S-adenosyl-L-methionine from L-methionine: step 1/1. Its function is as follows. Catalyzes the formation of S-adenosylmethionine (AdoMet) from methionine and ATP. The overall synthetic reaction is composed of two sequential steps, AdoMet formation and the subsequent tripolyphosphate hydrolysis which occurs prior to release of AdoMet from the enzyme. The protein is S-adenosylmethionine synthase of Vibrio vulnificus (strain YJ016).